The sequence spans 317 residues: Adenosine receptor A3 (317 aa).

Over 1 to 14 (MPVNSTAVSWTSVT) the chain is Extracellular. The N-linked (GlcNAc...) asparagine glycan is linked to Asn4. The chain crosses the membrane as a helical span at residues 15 to 37 (YITVEILIGLCAIVGNVLVIWVV). Topologically, residues 38–48 (KLNPSLQTTTF) are cytoplasmic. The chain crosses the membrane as a helical span at residues 49–72 (YFIVSLALADIAVGVLVMPLAIVI). At 73 to 84 (SLGVTIHFYSCL) the chain is on the extracellular side. An intrachain disulfide couples Cys83 to Cys165. A helical transmembrane segment spans residues 85–106 (FMTCLMLIFTHASIMSLLAIAV). Residues 107 to 126 (DRYLRVKLTVRYRRVTTQRR) are Cytoplasmic-facing. Residues 127–148 (IWLALGLCWLVSFLVGLTPMFG) traverse the membrane as a helical segment. Residues 149–176 (WNMKLSSADENLTFLPCRFRSVMRMDYM) lie on the Extracellular side of the membrane. Asn159 is a glycosylation site (N-linked (GlcNAc...) asparagine). Residues 177–197 (VYFSFFLWILVPLVVMCAIYF) traverse the membrane as a helical segment. Over 198–230 (DIFYIIRNRLSQSFSGSRETGAFYGREFKTAKS) the chain is Cytoplasmic. A helical membrane pass occupies residues 231-254 (LLLVLFLFALCWLPLSIINCILYF). Topologically, residues 255 to 260 (DGQVPQ) are extracellular. Residues 261 to 283 (TVLYLGILLSHANSMMNPIVYAY) form a helical membrane-spanning segment. The Cytoplasmic portion of the chain corresponds to 284 to 317 (KIKKFKETYLLILKACVMCQPSKSMDPSTEQTSE). The S-palmitoyl cysteine moiety is linked to residue Cys302.

This sequence belongs to the G-protein coupled receptor 1 family. Phosphorylation on Thr-315 and Ser-316 may be crucial for rapid desensitization. Phosphorylation on Thr-315 may be necessary for phosphorylation on Ser-316 to occur. In terms of tissue distribution, most abundant in lung, spleen and pineal gland. Moderate expression in brain, kidney and testis.

It localises to the cell membrane. Functionally, receptor for adenosine. The activity of this receptor is mediated by G proteins which inhibits adenylyl cyclase. The sequence is that of Adenosine receptor A3 (ADORA3) from Ovis aries (Sheep).